Here is a 176-residue protein sequence, read N- to C-terminus: Tubulin polymerization-promoting protein family member 3 (176 aa).

Alanine 2 bears the N-acetylalanine mark. A disordered region spans residues threonine 132–glutamine 152. The segment covering serine 134–lysine 144 has biased composition (basic and acidic residues).

The protein belongs to the TPPP family.

The protein resides in the cytoplasm. The protein localises to the cytoskeleton. Its function is as follows. Regulator of microtubule dynamic that has microtubule bundling activity. Required for embryo implantation; possibly by regulating beta-catenin. Also required for decidualization via regulation of beta-catenin. The polypeptide is Tubulin polymerization-promoting protein family member 3 (Mus musculus (Mouse)).